The following is a 180-amino-acid chain: Outer-membrane lipoprotein LolB (180 aa).

An N-terminal signal peptide occupies residues 1-16; it reads MIRRVLLLSLALLLAG. A lipid anchor (N-palmitoyl cysteine) is attached at cysteine 17. Cysteine 17 is lipidated: S-diacylglycerol cysteine.

The protein belongs to the LolB family. As to quaternary structure, monomer.

The protein localises to the cell outer membrane. Functionally, plays a critical role in the incorporation of lipoproteins in the outer membrane after they are released by the LolA protein. The polypeptide is Outer-membrane lipoprotein LolB (Chromobacterium violaceum (strain ATCC 12472 / DSM 30191 / JCM 1249 / CCUG 213 / NBRC 12614 / NCIMB 9131 / NCTC 9757 / MK)).